Here is a 545-residue protein sequence, read N- to C-terminus: Ribulokinase (545 aa).

The protein belongs to the ribulokinase family.

The enzyme catalyses D-ribulose + ATP = D-ribulose 5-phosphate + ADP + H(+). It carries out the reaction L-ribulose + ATP = L-ribulose 5-phosphate + ADP + H(+). It participates in carbohydrate degradation; L-arabinose degradation via L-ribulose; D-xylulose 5-phosphate from L-arabinose (bacterial route): step 2/3. The sequence is that of Ribulokinase from Staphylococcus aureus (strain MSSA476).